We begin with the raw amino-acid sequence, 160 residues long: MLQIKIVAVGKIRERFLMEGIKEYAKRLSAYIRLEMTEIADEPCPERLSAADEERVKDREGERLLKGIGPQEHVILLDLQGKEFTSPDFSEYMDELALMGKSSVTFIIGGSLGVSGEVRKRADYRWSFSRLTFPHPLMRLMLLEQIYRAMRISKGEPYHK.

Residues L77, G109, and 128–133 (FSRLTF) each bind S-adenosyl-L-methionine.

It belongs to the RNA methyltransferase RlmH family. Homodimer.

The protein localises to the cytoplasm. The catalysed reaction is pseudouridine(1915) in 23S rRNA + S-adenosyl-L-methionine = N(3)-methylpseudouridine(1915) in 23S rRNA + S-adenosyl-L-homocysteine + H(+). Its function is as follows. Specifically methylates the pseudouridine at position 1915 (m3Psi1915) in 23S rRNA. This is Ribosomal RNA large subunit methyltransferase H from Desulfitobacterium hafniense (strain DSM 10664 / DCB-2).